The sequence spans 258 residues: Peptidase inhibitor 15 (258 aa).

The N-terminal stretch at 1-21 (MIEMISISAAFLLSLLCETCG) is a signal peptide. A propeptide spanning residues 22 to 60 (LVLPKSSDLAIAASNYTIIKPDLSARLDPVKAPKARRKR) is cleaved from the precursor. N-linked (GlcNAc...) asparagine glycans are attached at residues N36 and N124. Residues 71-211 (VEYHNQVRGK…RRAVYLVCNY (141 aa)) form the SCP domain.

It belongs to the CRISP family.

It is found in the secreted. Its function is as follows. Serine protease inhibitor which displays weak inhibitory activity against trypsin. May be involved in facial patterning during embryonic development. This Xenopus laevis (African clawed frog) protein is Peptidase inhibitor 15 (pi15).